The chain runs to 214 residues: Leucyl/phenylalanyl-tRNA--protein transferase (214 aa).

Residues 194 to 214 (FAPPGYSPDPASVVQRSSQTS) form a disordered region.

Belongs to the L/F-transferase family.

The protein localises to the cytoplasm. It catalyses the reaction N-terminal L-lysyl-[protein] + L-leucyl-tRNA(Leu) = N-terminal L-leucyl-L-lysyl-[protein] + tRNA(Leu) + H(+). The catalysed reaction is N-terminal L-arginyl-[protein] + L-leucyl-tRNA(Leu) = N-terminal L-leucyl-L-arginyl-[protein] + tRNA(Leu) + H(+). The enzyme catalyses L-phenylalanyl-tRNA(Phe) + an N-terminal L-alpha-aminoacyl-[protein] = an N-terminal L-phenylalanyl-L-alpha-aminoacyl-[protein] + tRNA(Phe). Functionally, functions in the N-end rule pathway of protein degradation where it conjugates Leu, Phe and, less efficiently, Met from aminoacyl-tRNAs to the N-termini of proteins containing an N-terminal arginine or lysine. The sequence is that of Leucyl/phenylalanyl-tRNA--protein transferase from Cereibacter sphaeroides (strain ATCC 17025 / ATH 2.4.3) (Rhodobacter sphaeroides).